The sequence spans 307 residues: tRNA-cytidine(32) 2-sulfurtransferase (307 aa).

A PP-loop motif motif is present at residues Ser-44–Ser-49. Residues Cys-119, Cys-122, and Cys-210 each contribute to the [4Fe-4S] cluster site.

The protein belongs to the TtcA family. Homodimer. The cofactor is Mg(2+). [4Fe-4S] cluster serves as cofactor.

The protein resides in the cytoplasm. It catalyses the reaction cytidine(32) in tRNA + S-sulfanyl-L-cysteinyl-[cysteine desulfurase] + AH2 + ATP = 2-thiocytidine(32) in tRNA + L-cysteinyl-[cysteine desulfurase] + A + AMP + diphosphate + H(+). The protein operates within tRNA modification. Functionally, catalyzes the ATP-dependent 2-thiolation of cytidine in position 32 of tRNA, to form 2-thiocytidine (s(2)C32). The sulfur atoms are provided by the cysteine/cysteine desulfurase (IscS) system. This is tRNA-cytidine(32) 2-sulfurtransferase from Aliivibrio fischeri (strain ATCC 700601 / ES114) (Vibrio fischeri).